We begin with the raw amino-acid sequence, 249 residues long: Electron transfer flavoprotein subunit beta (249 aa).

Belongs to the ETF beta-subunit/FixA family. In terms of assembly, heterodimer of an alpha and a beta subunit. Requires FAD as cofactor. AMP is required as a cofactor.

The electron transfer flavoprotein serves as a specific electron acceptor for other dehydrogenases. It transfers the electrons to the main respiratory chain via ETF-ubiquinone oxidoreductase (ETF dehydrogenase). The protein is Electron transfer flavoprotein subunit beta (etfB) of Bradyrhizobium diazoefficiens (strain JCM 10833 / BCRC 13528 / IAM 13628 / NBRC 14792 / USDA 110).